A 359-amino-acid polypeptide reads, in one-letter code: Leafy/floricaula homolog FL1 (359 aa).

The tract at residues 113-170 is disordered; that stretch reads SEEQVVQHSEKDQLGRAGSGDTAGTSWGAQQQRKKHRHRHHITAMKGAATEEDEEDEE. The segment covering 144–155 has biased composition (basic residues); it reads QRKKHRHRHHIT. 3 DNA-binding regions span residues 179–183, 248–255, and 320–323; these read REHPF, NKPKMRHY, and YVPT. The segment covering 340-352 has biased composition (low complexity); it reads ASSASTSTSAPTA. The interval 340–359 is disordered; the sequence is ASSASTSTSAPTAHHLELPY.

This sequence belongs to the FLO/LFY family. In terms of tissue distribution, expressed strongly in the early floral primordium and then successively in the primordia of sepals, petals, stamens and carpels. Also in the leaf primordia and young leaves.

It is found in the nucleus. In terms of biological role, probable transcription factor. This Eucalyptus globulus (Tasmanian blue gum) protein is Leafy/floricaula homolog FL1 (LF1).